A 523-amino-acid chain; its full sequence is NAD(P)H-quinone oxidoreductase subunit 2 (523 aa).

Helical transmembrane passes span 29–49, 57–77, 94–114, 123–143, 147–167, 182–202, 221–243, 255–275, 291–311, 317–337, 345–365, 389–409, 424–444, and 477–497; these read AIAPEGAVLVAMLATLLVDLA, WVPPICYAGLGTALVLLAQQW, LAIAFRAVVALSTLLSLLISW, PIGEYAAILLAATLGAMLLCG, LVSVFVSLETLSVASYLLAGY, LLVGSAAAAVFLYGASLLYGL, PLAALSLVFVLATVAFKIAAVPF, PTPVVAFLSVGSKAAGFALAL, LLFTVLAVLSMTLGNVVALAQ, MLAYSSIGQAGFVMIGLVCGT, VLYMAAYLFMNLGAFACIILF, LGLSLCLLSLGGIPPMLGFFG, LLVVVGLVTSVVSIYYYISVI, and IALVGCVVVTAVGGILSNPLF.

It belongs to the complex I subunit 2 family. In terms of assembly, NDH-1 can be composed of about 15 different subunits; different subcomplexes with different compositions have been identified which probably have different functions.

The protein resides in the cellular thylakoid membrane. It carries out the reaction a plastoquinone + NADH + (n+1) H(+)(in) = a plastoquinol + NAD(+) + n H(+)(out). It catalyses the reaction a plastoquinone + NADPH + (n+1) H(+)(in) = a plastoquinol + NADP(+) + n H(+)(out). Its function is as follows. NDH-1 shuttles electrons from an unknown electron donor, via FMN and iron-sulfur (Fe-S) centers, to quinones in the respiratory and/or the photosynthetic chain. The immediate electron acceptor for the enzyme in this species is believed to be plastoquinone. Couples the redox reaction to proton translocation, and thus conserves the redox energy in a proton gradient. Cyanobacterial NDH-1 also plays a role in inorganic carbon-concentration. In Prochlorococcus marinus (strain MIT 9303), this protein is NAD(P)H-quinone oxidoreductase subunit 2.